A 473-amino-acid polypeptide reads, in one-letter code: ATP synthase subunit beta 2 (473 aa).

158–165 is a binding site for ATP; it reads GGAGVGKT.

The protein belongs to the ATPase alpha/beta chains family. F-type ATPases have 2 components, CF(1) - the catalytic core - and CF(0) - the membrane proton channel. CF(1) has five subunits: alpha(3), beta(3), gamma(1), delta(1), epsilon(1). CF(0) has three main subunits: a(1), b(2) and c(9-12). The alpha and beta chains form an alternating ring which encloses part of the gamma chain. CF(1) is attached to CF(0) by a central stalk formed by the gamma and epsilon chains, while a peripheral stalk is formed by the delta and b chains.

The protein localises to the cell membrane. It carries out the reaction ATP + H2O + 4 H(+)(in) = ADP + phosphate + 5 H(+)(out). Functionally, produces ATP from ADP in the presence of a proton gradient across the membrane. The catalytic sites are hosted primarily by the beta subunits. This Listeria monocytogenes serotype 4b (strain F2365) protein is ATP synthase subunit beta 2.